The primary structure comprises 402 residues: Subtilisin-like protease 9 (402 aa).

The first 18 residues, 1-18 (MGFFRILFSLSLCALSLA), serve as a signal peptide directing secretion. Residues 19–120 (IPSKLIGLEN…VEVDRVVKLD (102 aa)) constitute a propeptide that is removed on maturation. The region spanning 36–119 (SYIVVMKSAV…YVEVDRVVKL (84 aa)) is the Inhibitor I9 domain. Residues 130 to 402 (SWGLGRISHR…KKLLYNGSGA (273 aa)) enclose the Peptidase S8 domain. Active-site charge relay system residues include aspartate 162 and histidine 193. The N-linked (GlcNAc...) asparagine glycan is linked to asparagine 254. Serine 348 functions as the Charge relay system in the catalytic mechanism. Residues asparagine 390 and asparagine 398 are each glycosylated (N-linked (GlcNAc...) asparagine).

Belongs to the peptidase S8 family.

Its subcellular location is the secreted. Functionally, secreted subtilisin-like serine protease with keratinolytic activity that contributes to pathogenicity. This is Subtilisin-like protease 9 (SUB9) from Arthroderma gypseum (strain ATCC MYA-4604 / CBS 118893) (Microsporum gypseum).